Consider the following 367-residue polypeptide: Mitogen-activated protein kinase 12 (367 aa).

Residues 27–311 (YQDLQPVGSG…AAEALTHPYF (285 aa)) enclose the Protein kinase domain. Residues 33 to 41 (VGSGAYGAV) and K56 each bind ATP. D153 acts as the Proton acceptor in catalysis. The residue at position 183 (T183) is a Phosphothreonine. Residues 183-185 (TGY) carry the TXY motif. Residue Y185 is modified to Phosphotyrosine.

Belongs to the protein kinase superfamily. CMGC Ser/Thr protein kinase family. MAP kinase subfamily. In terms of assembly, monomer. Interacts with the PDZ domain of the syntrophin SNTA1. Interacts with SH3BP5, LIN7C, SCRIB and SYNJ2BP. Interacts with PTPN4; this interaction induces the activation of PTPN4 phosphatase activity. Mg(2+) is required as a cofactor. Dually phosphorylated on Thr-183 and Tyr-185 by MAP2K3/MKK3 and MAP2K6/MKK6, which activates the enzyme. Post-translationally, ubiquitinated. Ubiquitination leads to degradation by the proteasome pathway. In terms of tissue distribution, highly expressed in skeletal muscle. Also expressed in the heart, particularly in cardiac myocytes, lung, thymus and testes.

The protein localises to the cytoplasm. It is found in the nucleus. It localises to the mitochondrion. It catalyses the reaction L-seryl-[protein] + ATP = O-phospho-L-seryl-[protein] + ADP + H(+). It carries out the reaction L-threonyl-[protein] + ATP = O-phospho-L-threonyl-[protein] + ADP + H(+). With respect to regulation, activated by phosphorylation on threonine and tyrosine. MAP2K3/MKK3 and MAP2K6/MKK6 are both essential for the activation of MAPK12 induced by environmental stress, whereas MAP2K6/MKK6 is the major MAPK12 activator in response to TNF-alpha. Serine/threonine kinase which acts as an essential component of the MAP kinase signal transduction pathway. MAPK12 is one of the four p38 MAPKs which play an important role in the cascades of cellular responses evoked by extracellular stimuli such as pro-inflammatory cytokines or physical stress leading to direct activation of transcription factors such as ELK1 and ATF2. Accordingly, p38 MAPKs phosphorylate a broad range of proteins and it has been estimated that they may have approximately 200 to 300 substrates each. Some of the targets are downstream kinases such as MAPKAPK2, which are activated through phosphorylation and further phosphorylate additional targets. Plays a role in myoblast differentiation and also in the down-regulation of cyclin D1 in response to hypoxia in adrenal cells suggesting MAPK12 may inhibit cell proliferation while promoting differentiation. Phosphorylates DLG1. Following osmotic shock, MAPK12 in the cell nucleus increases its association with nuclear DLG1, thereby causing dissociation of DLG1-SFPQ complexes. This function is independent of its catalytic activity and could affect mRNA processing and/or gene transcription to aid cell adaptation to osmolarity changes in the environment. Regulates UV-induced checkpoint signaling and repair of UV-induced DNA damage and G2 arrest after gamma-radiation exposure. MAPK12 is involved in the regulation of SLC2A1 expression and basal glucose uptake in L6 myotubes; and negatively regulates SLC2A4 expression and contraction-mediated glucose uptake in adult skeletal muscle. C-Jun (JUN) phosphorylation is stimulated by MAPK14 and inhibited by MAPK12, leading to a distinct AP-1 regulation. MAPK12 is required for the normal kinetochore localization of PLK1, prevents chromosomal instability and supports mitotic cell viability. MAPK12-signaling is also positively regulating the expansion of transient amplifying myogenic precursor cells during muscle growth and regeneration. The sequence is that of Mitogen-activated protein kinase 12 (Mapk12) from Mus musculus (Mouse).